A 299-amino-acid chain; its full sequence is Nitrogenase iron protein (299 aa).

ATP is bound at residue 8 to 15; sequence GKGGIGKS. Cys96 serves as a coordination point for [4Fe-4S] cluster. Arg99 bears the ADP-ribosylarginine; by dinitrogenase reductase ADP-ribosyltransferase mark. A [4Fe-4S] cluster-binding site is contributed by Cys130.

Belongs to the NifH/BchL/ChlL family. In terms of assembly, homodimer. Requires [4Fe-4S] cluster as cofactor. The reversible ADP-ribosylation of Arg-99 inactivates the nitrogenase reductase and regulates nitrogenase activity.

The catalysed reaction is N2 + 8 reduced [2Fe-2S]-[ferredoxin] + 16 ATP + 16 H2O = H2 + 8 oxidized [2Fe-2S]-[ferredoxin] + 2 NH4(+) + 16 ADP + 16 phosphate + 6 H(+). Functionally, the key enzymatic reactions in nitrogen fixation are catalyzed by the nitrogenase complex, which has 2 components: the iron protein and the molybdenum-iron protein. The chain is Nitrogenase iron protein from Gloeothece citriformis (strain PCC 7424) (Cyanothece sp. (strain PCC 7424)).